Here is a 270-residue protein sequence, read N- to C-terminus: GTP cyclohydrolase FolE2 (270 aa).

This sequence belongs to the GTP cyclohydrolase IV family.

It catalyses the reaction GTP + H2O = 7,8-dihydroneopterin 3'-triphosphate + formate + H(+). The protein operates within cofactor biosynthesis; 7,8-dihydroneopterin triphosphate biosynthesis; 7,8-dihydroneopterin triphosphate from GTP: step 1/1. Functionally, converts GTP to 7,8-dihydroneopterin triphosphate. The chain is GTP cyclohydrolase FolE2 from Cupriavidus pinatubonensis (strain JMP 134 / LMG 1197) (Cupriavidus necator (strain JMP 134)).